Reading from the N-terminus, the 803-residue chain is Mastermind-like domain-containing protein 1 (803 aa).

4 disordered regions span residues 22-50 (NRQE…TGMA), 292-374 (LAAS…APSS), 420-452 (GHLI…QQSF), and 486-641 (QQQQ…PDQS). Residues 296–309 (KQGSATKQGSNRNW) are compositionally biased toward polar residues. Residues 312 to 340 (LPPPGLSPPYLPVPSPHPPPPQPPPPPFS) show a composition bias toward pro residues. Residues 347–362 (SCMSSSSLSGSAVQSS) are compositionally biased toward low complexity. Composition is skewed to polar residues over residues 363–374 (PNALLSSMAPSS), 441–452 (NLSSPGLPQQSF), 495–526 (HQAN…SSSP), and 547–564 (PSPQ…QSSL). The segment covering 571–588 (ATPAHAPSATASSTATAT) has biased composition (low complexity). Over residues 592–622 (QHHHQQHHHQQHHHQQQHHQQQHHQQHHHQQ) the composition is skewed to basic residues. A compositionally biased stretch (low complexity) spans 623 to 641 (QQHQQQQHQQQQQQQPDQS).

Belongs to the mastermind family.

Its subcellular location is the nucleus. Functionally, transactivates the HES3 promoter independently of NOTCH proteins. HES3 is a non-canonical NOTCH target gene which lacks binding sites for RBPJ. Required for testosterone production. The protein is Mastermind-like domain-containing protein 1 (Mamld1) of Mus musculus (Mouse).